The following is a 151-amino-acid chain: Protein ECM12 (151 aa).

N-linked (GlcNAc...) asparagine glycosylation occurs at Asn2. 2 helical membrane-spanning segments follow: residues 17 to 37 (LLVF…IFFF) and 51 to 71 (AFLA…VGFF). 2 N-linked (GlcNAc...) asparagine glycosylation sites follow: Asn132 and Asn137.

The protein resides in the membrane. Its function is as follows. May be involved in cell wall organization and biogenesis. This Saccharomyces cerevisiae (strain ATCC 204508 / S288c) (Baker's yeast) protein is Protein ECM12 (ECM12).